The primary structure comprises 518 residues: Glucan 1,4-alpha-maltohexaosidase (518 aa).

A signal peptide spans 1 to 33 (MKMRTGKKGFLSILLAFLLVITSIPFTLVDVEA). Ca(2+)-binding residues include asparagine 139, aspartate 196, alanine 219, aspartate 221, aspartate 232, aspartate 238, aspartate 240, and aspartate 242. Aspartate 196 is a Na(+) binding site. Residues aspartate 221, aspartate 232, and aspartate 238 each contribute to the Na(+) site. The active-site Nucleophile is the aspartate 269. Histidine 273 is a Ca(2+) binding site. Glutamate 299 serves as the catalytic Proton donor.

This sequence belongs to the glycosyl hydrolase 13 family. Ca(2+) serves as cofactor. It depends on Na(+) as a cofactor.

The protein resides in the secreted. The catalysed reaction is Hydrolysis of (1-&gt;4)-alpha-D-glucosidic linkages in amylaceous polysaccharides, to remove successive maltohexaose residues from the non-reducing chain ends.. Its pathway is glycan degradation; starch degradation. The sequence is that of Glucan 1,4-alpha-maltohexaosidase from Bacillus sp. (strain 707).